Here is a 394-residue protein sequence, read N- to C-terminus: Chorismate synthase (394 aa).

Positions 40 and 46 each coordinate NADP(+). Residues 135–137 (RAS), 255–256 (QA), G302, 317–321 (KPISS), and R343 each bind FMN.

Belongs to the chorismate synthase family. Homotetramer. FMNH2 serves as cofactor.

It catalyses the reaction 5-O-(1-carboxyvinyl)-3-phosphoshikimate = chorismate + phosphate. It functions in the pathway metabolic intermediate biosynthesis; chorismate biosynthesis; chorismate from D-erythrose 4-phosphate and phosphoenolpyruvate: step 7/7. In terms of biological role, catalyzes the anti-1,4-elimination of the C-3 phosphate and the C-6 proR hydrogen from 5-enolpyruvylshikimate-3-phosphate (EPSP) to yield chorismate, which is the branch point compound that serves as the starting substrate for the three terminal pathways of aromatic amino acid biosynthesis. This reaction introduces a second double bond into the aromatic ring system. This chain is Chorismate synthase, found in Parafrankia sp. (strain EAN1pec).